A 122-amino-acid chain; its full sequence is Large ribosomal subunit protein uL18 (122 aa).

This sequence belongs to the universal ribosomal protein uL18 family. In terms of assembly, part of the 50S ribosomal subunit; part of the 5S rRNA/L5/L18/L25 subcomplex. Contacts the 5S and 23S rRNAs.

Its function is as follows. This is one of the proteins that bind and probably mediate the attachment of the 5S RNA into the large ribosomal subunit, where it forms part of the central protuberance. The chain is Large ribosomal subunit protein uL18 from Leptospira biflexa serovar Patoc (strain Patoc 1 / Ames).